The chain runs to 571 residues: Proline--tRNA ligase (571 aa).

This sequence belongs to the class-II aminoacyl-tRNA synthetase family. ProS type 1 subfamily. Homodimer.

It is found in the cytoplasm. The enzyme catalyses tRNA(Pro) + L-proline + ATP = L-prolyl-tRNA(Pro) + AMP + diphosphate. Functionally, catalyzes the attachment of proline to tRNA(Pro) in a two-step reaction: proline is first activated by ATP to form Pro-AMP and then transferred to the acceptor end of tRNA(Pro). As ProRS can inadvertently accommodate and process non-cognate amino acids such as alanine and cysteine, to avoid such errors it has two additional distinct editing activities against alanine. One activity is designated as 'pretransfer' editing and involves the tRNA(Pro)-independent hydrolysis of activated Ala-AMP. The other activity is designated 'posttransfer' editing and involves deacylation of mischarged Ala-tRNA(Pro). The misacylated Cys-tRNA(Pro) is not edited by ProRS. The chain is Proline--tRNA ligase from Shewanella sp. (strain W3-18-1).